Consider the following 159-residue polypeptide: Cyclic pyranopterin monophosphate synthase (159 aa).

Substrate contacts are provided by residues Leu-75–His-77 and Met-113–Glu-114. The active site involves Asp-128.

The protein belongs to the MoaC family. In terms of assembly, homohexamer; trimer of dimers.

It catalyses the reaction (8S)-3',8-cyclo-7,8-dihydroguanosine 5'-triphosphate = cyclic pyranopterin phosphate + diphosphate. Its pathway is cofactor biosynthesis; molybdopterin biosynthesis. Functionally, catalyzes the conversion of (8S)-3',8-cyclo-7,8-dihydroguanosine 5'-triphosphate to cyclic pyranopterin monophosphate (cPMP). The protein is Cyclic pyranopterin monophosphate synthase of Cereibacter sphaeroides (strain ATCC 17023 / DSM 158 / JCM 6121 / CCUG 31486 / LMG 2827 / NBRC 12203 / NCIMB 8253 / ATH 2.4.1.) (Rhodobacter sphaeroides).